The primary structure comprises 1113 residues: Tudor domain-containing protein 7 (1113 aa).

HTH OST-type domains follow at residues Glu3 to Ala76 and Lys249 to Lys318. Residues Glu320 to Pro334 are compositionally biased toward basic and acidic residues. The disordered stretch occupies residues Glu320–Val352. The HTH OST-type 3 domain occupies Val352–Leu421. Tudor domains are found at residues Thr528–Leu585 and Leu718–Glu775. A disordered region spans residues Ser873 to Ser895. Position 874 is a phosphoserine (Ser874). Over residues Pro875–Ala884 the composition is skewed to polar residues. The segment at Gly876–Asn1113 is interaction with CDK17. Residues Thr908–Asn1113 are interaction with CABLES1.

This sequence belongs to the TDRD7 family. Found in a mRNP complex, at least composed of TDRD1, TDRD6, TDRD7 and DDX4. Found in a complex containing CABLES1, CDK16 and CDK17. Interacts with CABLES1, CDK17 and PIWIL1. As to expression, expressed in brain and testis.

It localises to the cytoplasm. In terms of biological role, component of specific cytoplasmic RNA granules involved in post-transcriptional regulation of specific genes: probably acts by binding to specific mRNAs and regulating their translation. Required for lens transparency during lens development, by regulating translation of genes such as CRYBB3 and HSPB1 in the developing lens. Also required during spermatogenesis. The polypeptide is Tudor domain-containing protein 7 (Tdrd7) (Rattus norvegicus (Rat)).